Consider the following 157-residue polypeptide: MGFPKVERLLINYKTLDEFKKFKGCGAQELSMLEELQANIIENNSESPFYGIYYGGSLIARMSLYMKRNGGEPFEITGTYLELYKLEVLPTFQKQGFGEMLVNYAKGLQFPIKTIARIHSAGFWDKLNFQPVSVPDGDFYVWHPETNLNAVTNEESA.

In terms of domain architecture, N-acetyltransferase spans 9-146 (LLINYKTLDE…GDFYVWHPET (138 aa)).

This is an uncharacterized protein from Bacillus cereus (strain AH187).